The sequence spans 645 residues: MSTPHLYPVPEALAANAHINNEKYHTDYARSINEPDVFWAEKAREFLTWDKPWQSVRSFDFHKGEATWFEGGKLNVTVNCIDRHLPTKANDVAIIWEGDDPSVDASITYQQLHDAVCKFANVLKARGVAKGDRVCIYMPMIPEAAYAMLACARIGAVHSIVFGGFSPEALKDRIVDSDCKVLITADEGLRGGRAVALKANADKAVAHCPQVHSVIVVKRTGADVAWNTERDIWLHEAQQSVDTVCEPESMDSEDPLFILYTSGSTGKPKGVLHTTGGYLLQAAMTHKYVFDYQPGEVYWCTADVGWVTGHTYIVYGPLTNGATTLMFEGVPTYPTAARCWEVCDKHNVNIFYTAPTAIRALMGQGDEFVASTQRKSLRILGTVGEPINPEAWEWYYNVVGDRRCPIMDTWWQTETGGHMLTPLPGAIDLKPGSATLPFFGVEPVLLDGEGNIIEGEGEGSLAIKSSWPGQIRTVYGDHDRLIQTYFSTYPGYYFTGDGARRDADGYYWITGRVDDVLNVSGHRMGTAEVESALVLHPKVAEAAVVGYPHDVKGQGIYAYVTLMTGVEPDDGLRKELVAMCTQEIGPIAKPDLIQWAPGLPKTRSGKIMRRILRKVAANELDTLGDTSTLADPSVVDDLIENRMNR.

Residues 190 to 193 (RGGR) and T308 each bind CoA. ATP contacts are provided by residues 384 to 386 (GEP), 408 to 413 (DTWWQT), D497, and R512. S520 is a CoA binding site. An ATP-binding site is contributed by R523. Positions 534, 536, and 539 each coordinate Mg(2+). K606 is modified (N6-acetyllysine).

It belongs to the ATP-dependent AMP-binding enzyme family. Mg(2+) serves as cofactor. Acetylated. Deacetylation by the SIR2-homolog deacetylase activates the enzyme.

It catalyses the reaction acetate + ATP + CoA = acetyl-CoA + AMP + diphosphate. Catalyzes the conversion of acetate into acetyl-CoA (AcCoA), an essential intermediate at the junction of anabolic and catabolic pathways. AcsA undergoes a two-step reaction. In the first half reaction, AcsA combines acetate with ATP to form acetyl-adenylate (AcAMP) intermediate. In the second half reaction, it can then transfer the acetyl group from AcAMP to the sulfhydryl group of CoA, forming the product AcCoA. This chain is Acetyl-coenzyme A synthetase, found in Saccharophagus degradans (strain 2-40 / ATCC 43961 / DSM 17024).